A 206-amino-acid chain; its full sequence is MIALGIDPGSRRCGYGVVAREGTRLVVVASGVLAPRAERPVAERLARILDGLAEVIRRAGPAECSIEQVFSGASVRSALVLGQARGVALAAAAQAGLPVFEYAPSEVKLAFTGSGRATKDQMIRTAHMLLGATPGLSDEADALALAVCHLARRAGRLAVPAVRNVAVSVPGVAGRARPLALPPARERAALAAARLRPSRRDHRGLA.

Active-site residues include D7, E67, and D138. Residues D7, E67, and D138 each coordinate Mg(2+).

Belongs to the RuvC family. Homodimer which binds Holliday junction (HJ) DNA. The HJ becomes 2-fold symmetrical on binding to RuvC with unstacked arms; it has a different conformation from HJ DNA in complex with RuvA. In the full resolvosome a probable DNA-RuvA(4)-RuvB(12)-RuvC(2) complex forms which resolves the HJ. Requires Mg(2+) as cofactor.

Its subcellular location is the cytoplasm. The catalysed reaction is Endonucleolytic cleavage at a junction such as a reciprocal single-stranded crossover between two homologous DNA duplexes (Holliday junction).. In terms of biological role, the RuvA-RuvB-RuvC complex processes Holliday junction (HJ) DNA during genetic recombination and DNA repair. Endonuclease that resolves HJ intermediates. Cleaves cruciform DNA by making single-stranded nicks across the HJ at symmetrical positions within the homologous arms, yielding a 5'-phosphate and a 3'-hydroxyl group; requires a central core of homology in the junction. The consensus cleavage sequence is 5'-(A/T)TT(C/G)-3'. Cleavage occurs on the 3'-side of the TT dinucleotide at the point of strand exchange. HJ branch migration catalyzed by RuvA-RuvB allows RuvC to scan DNA until it finds its consensus sequence, where it cleaves and resolves the cruciform DNA. The polypeptide is Crossover junction endodeoxyribonuclease RuvC (Anaeromyxobacter sp. (strain Fw109-5)).